A 323-amino-acid polypeptide reads, in one-letter code: CTD kinase subunit beta (323 aa).

This sequence belongs to the cyclin family. CTDK-I consists of three subunits, CTK1, CTK2 and CTK3 (also called alpha, beta and gamma). Interacts with CTK1. Heterodimerization with CTK3 is required to protect this subunit from degradation. In terms of processing, phosphorylated. Ubiquitinated. Phosphorylation and ubiquitination lead to degradation in growth-related way by the ubiquitin-proteasome pathway. Neither phosphorylation nor degradation requires association with CTK1.

The protein localises to the nucleus. It localises to the nucleolus. Cyclin subunit of the CTDK-I complex, which hyperphosphorylates the C-terminal heptapeptide repeat domain (CTD) of the largest RNA polymerase II subunit. CTDK-I phosphorylates 'Ser-5' if the CTD substrate is not phosphorylated at 'Ser-5', but will phosphorylate 'Ser-2' of a CTD substrate if 'Ser-5' is already phosphorylated. CTDK-I is also more reactive toward substrates that are prephosphorylated at 'Ser-2' or 'Ser-5' compared with an unphosphorylated CTD substrate, therefore efficiently creating doubly phosphorylated CTD repeats. Involved in RNA polymerase II transcriptional elongation, and as part of the CTDK-I complex, pre-mRNA 3'-end processing and SET2 mediated H3K36 methylation. Together with CTK3, required for CTK1 CTD kinase activation. Required for DNA damage induced transcription. Involved in the adaptation to alternative carbon sources, including galactose, glycerol and ethanol, but not raffinose. Required for the integrity of the rDNA locus. The chain is CTD kinase subunit beta (CTK2) from Saccharomyces cerevisiae (strain ATCC 204508 / S288c) (Baker's yeast).